The primary structure comprises 548 residues: ATP synthase subunit alpha (548 aa).

An ATP-binding site is contributed by 172-179 (GDRKTGKT). The segment at 511–548 (FETTSGESVVPDENVEAMSEDDVEKESVKVRKPAPKKK) is disordered. Residues 523–534 (ENVEAMSEDDVE) show a composition bias toward acidic residues.

This sequence belongs to the ATPase alpha/beta chains family. As to quaternary structure, F-type ATPases have 2 components, CF(1) - the catalytic core - and CF(0) - the membrane proton channel. CF(1) has five subunits: alpha(3), beta(3), gamma(1), delta(1), epsilon(1). CF(0) has three main subunits: a(1), b(2) and c(9-12). The alpha and beta chains form an alternating ring which encloses part of the gamma chain. CF(1) is attached to CF(0) by a central stalk formed by the gamma and epsilon chains, while a peripheral stalk is formed by the delta and b chains.

The protein localises to the cell membrane. It catalyses the reaction ATP + H2O + 4 H(+)(in) = ADP + phosphate + 5 H(+)(out). In terms of biological role, produces ATP from ADP in the presence of a proton gradient across the membrane. The alpha chain is a regulatory subunit. This is ATP synthase subunit alpha from Mycobacterium sp. (strain JLS).